We begin with the raw amino-acid sequence, 671 residues long: Solute carrier family 5 member 4 (671 aa).

At 1-38 (MPAMGTALPRAMASTASVSTSTGSSELSSLSDNINNPA) the chain is on the cytoplasmic side. A helical membrane pass occupies residues 39–59 (DISVIVIYFVVVMAVGVWAMV). The Extracellular portion of the chain corresponds to 60 to 65 (KTNRST). A helical transmembrane segment spans residues 66–86 (VGGFFLAGRSMTWWPMGASLF). At 87-89 (ASN) the chain is on the cytoplasmic side. The chain crosses the membrane as a helical span at residues 90-110 (IGSGHFVGLAGTGAATGIAVT). Residues 111 to 116 (AFESHS) lie on the Extracellular side of the membrane. A helical transmembrane segment spans residues 117–137 (FALLLVLGWFFVPIYIKAGVM). The Cytoplasmic segment spans residues 138–159 (TMPEYLRKRFGGKRLQIYLSVL). Residues 160–180 (SLFICVILTISADIFSGAIFI) form a helical membrane-spanning segment. Lysine 181 is a topological domain (extracellular). The chain crosses the membrane as a helical span at residues 182-202 (LALGLDLYLAIFILLAITAVF). At 203–218 (TITGGLASVIYTDTLQ) the chain is on the cytoplasmic side. The helical transmembrane segment at 219 to 239 (AIIMLVGSFILMIYAFVEVGG) threads the bilayer. Topologically, residues 240-288 (YESFTEKYMNAIPSVVEGDNLTISPKCYTPQPDSFHIFRDAVTGDIPWP) are extracellular. A helical membrane pass occupies residues 289 to 309 (GTAFGMPITALWYWCINQVIV). Residues 310–324 (QRCLCGKNMSHVKAA) are Cytoplasmic-facing. A helical membrane pass occupies residues 325 to 345 (CIVCGYLKLLPIFFMVMPGMI). At 346 to 378 (SRILYTDMVACVVPSECVKQCGVDVGCTNYAYP) the chain is on the extracellular side. The chain crosses the membrane as a helical span at residues 379–399 (MLVLKLMPMGLRGLMLSVMLA). Residues 400 to 434 (SLMSSLTSIFNSASTLFTMDLYTKIRKKASERELL) are Cytoplasmic-facing. A helical transmembrane segment spans residues 435 to 455 (IAGRLFVSVLIVTSILWVPIV). The Extracellular segment spans residues 456 to 467 (EVSQGGQLIHYT). Residues 468 to 488 (EAISSYLGPPIAAVFLVAIFC) form a helical membrane-spanning segment. The Cytoplasmic portion of the chain corresponds to 489-494 (KRVNEQ). The chain crosses the membrane as a helical span at residues 495 to 515 (GAFWGLMVGLVLGLIRMIAEF). At 516–537 (SYGTGSCLAPSSCPKVICGVHY) the chain is on the extracellular side. A helical transmembrane segment spans residues 538–558 (LYYAIILFFVSILVILGVSYL). The Cytoplasmic portion of the chain corresponds to 559–650 (TKPIPDVHLY…DTSEKPFWRT (92 aa)). The segment covering 583–593 (DLDAEDREENE) has biased composition (acidic residues). Residues 583–604 (DLDAEDREENEADARTEEDQTE) form a disordered region. Residues 594-604 (ADARTEEDQTE) show a composition bias toward basic and acidic residues. Residues 651-671 (VVNVNVIVLLAVAAFFYGYFA) form a helical membrane-spanning segment.

It belongs to the sodium:solute symporter (SSF) (TC 2.A.21) family.

Its subcellular location is the cell membrane. Functionally, generates D-glucose-induced depolarization in a pH-dependent and Na(+)-independent manner, with activity in acidic conditions (pH 5) but not neutral conditions. In Rattus norvegicus (Rat), this protein is Solute carrier family 5 member 4.